The primary structure comprises 453 residues: Tubulin delta chain (453 aa).

A143–G149 provides a ligand contact to GTP.

Belongs to the tubulin family. Found in a complex with TEDC1, TEDC2, TUBE1 and TUBD1.

The protein resides in the nucleus. It localises to the cytoplasm. It is found in the cytoskeleton. The protein localises to the microtubule organizing center. Its subcellular location is the centrosome. The protein resides in the centriole. It localises to the cell projection. It is found in the cilium. Acts as a positive regulator of hedgehog signaling and regulates ciliary function. This is Tubulin delta chain (TUBD1) from Canis lupus familiaris (Dog).